The primary structure comprises 117 residues: Protein RALF-like 27 (117 aa).

Positions 1-27 are cleaved as a signal peptide; that stretch reads MTKTFFSFSFFFTSSLLLLLAATSATA. The propeptide at 28 to 71 is removed in mature form; it reads STGNVTSGLRYDGCAPGDTVGECITATVEEEDEEGVEAVVRRIL. A glycan (N-linked (GlcNAc...) asparagine) is linked at Asn-31. Intrachain disulfides connect Cys-88–Cys-96 and Cys-107–Cys-113.

Belongs to the plant rapid alkalinization factor (RALF) family.

Its subcellular location is the secreted. Cell signaling peptide that may regulate plant stress, growth, and development. Mediates a rapid alkalinization of extracellular space by mediating a transient increase in the cytoplasmic Ca(2+) concentration leading to a calcium-dependent signaling events through a cell surface receptor and a concomitant activation of some intracellular mitogen-activated protein kinases. The protein is Protein RALF-like 27 (RALFL27) of Arabidopsis thaliana (Mouse-ear cress).